Consider the following 253-residue polypeptide: Uracil-DNA glycosylase (253 aa).

Asp79 serves as the catalytic Proton acceptor.

This sequence belongs to the uracil-DNA glycosylase (UDG) superfamily. UNG family.

It is found in the cytoplasm. The enzyme catalyses Hydrolyzes single-stranded DNA or mismatched double-stranded DNA and polynucleotides, releasing free uracil.. Its function is as follows. Excises uracil residues from the DNA which can arise as a result of misincorporation of dUMP residues by DNA polymerase or due to deamination of cytosine. This Xylella fastidiosa (strain M23) protein is Uracil-DNA glycosylase.